Reading from the N-terminus, the 266-residue chain is Glutamate racemase 1 (266 aa).

Substrate is bound by residues 11 to 12 and 43 to 44; these read DS and YG. Cysteine 74 (proton donor/acceptor) is an active-site residue. 75 to 76 lines the substrate pocket; the sequence is NT. The active-site Proton donor/acceptor is the cysteine 182. 183-184 contacts substrate; sequence TH.

Belongs to the aspartate/glutamate racemases family.

The catalysed reaction is L-glutamate = D-glutamate. It participates in cell wall biogenesis; peptidoglycan biosynthesis. Its function is as follows. Provides the (R)-glutamate required for cell wall biosynthesis. The chain is Glutamate racemase 1 from Caldanaerobacter subterraneus subsp. tengcongensis (strain DSM 15242 / JCM 11007 / NBRC 100824 / MB4) (Thermoanaerobacter tengcongensis).